Here is a 239-residue protein sequence, read N- to C-terminus: Uridylate kinase (239 aa).

Residue K13 to G16 participates in ATP binding. G55 is a binding site for UMP. Residues G56 and R60 each contribute to the ATP site. Residues D75 and T136 to T143 each bind UMP. ATP-binding residues include T163, N164, Y169, and D172.

The protein belongs to the UMP kinase family. Homohexamer.

The protein localises to the cytoplasm. The catalysed reaction is UMP + ATP = UDP + ADP. It functions in the pathway pyrimidine metabolism; CTP biosynthesis via de novo pathway; UDP from UMP (UMPK route): step 1/1. With respect to regulation, inhibited by UTP. Its function is as follows. Catalyzes the reversible phosphorylation of UMP to UDP. In Neisseria gonorrhoeae (strain ATCC 700825 / FA 1090), this protein is Uridylate kinase.